A 125-amino-acid chain; its full sequence is Oxytocin-neurophysin 1 (125 aa).

An N-terminal signal peptide occupies residues 1–19 (MAGPSLACCLLGLLALTSA). C20 and C25 form a disulfide bridge. A Glycine amide modification is found at G28. 7 disulfides stabilise this stretch: C41-C85, C44-C58, C52-C75, C59-C65, C92-C104, C98-C116, and C105-C110.

The protein belongs to the vasopressin/oxytocin family. As to quaternary structure, interacts with oxytocin receptor (Ki=1.5 nM). Interacts with vasopressin V1aR/AVPR1A (Ki=37 nM), V1bR/AVPR1B (Ki=222 nM) and V2R/AVPR2 receptors (Ki=823 nM).

The protein localises to the secreted. Functionally, neurophysin 1 specifically binds oxytocin. Its function is as follows. Oxytocin causes contraction of the smooth muscle of the uterus and of the mammary gland. Acts by binding to oxytocin receptor (OXTR). This chain is Oxytocin-neurophysin 1 (OXT), found in Homo sapiens (Human).